A 164-amino-acid polypeptide reads, in one-letter code: UPF0561 protein C2orf68 homolog (164 aa).

Composition is skewed to basic and acidic residues over residues 1–13 and 35–49; these read MEVI…ESVK and IARD…QAKE. A disordered region spans residues 1-98; sequence MEVIRDGEGE…WNESSSGTEM (98 aa). Positions 50-64 are enriched in basic residues; sequence KQRRRHTNTPRRPRR.

It belongs to the UPF0561 family.

In Danio rerio (Zebrafish), this protein is UPF0561 protein C2orf68 homolog.